A 148-amino-acid chain; its full sequence is Deoxyuridine 5'-triphosphate nucleotidohydrolase (148 aa).

Residues 68 to 70 (RSG), Asn-81, 85 to 87 (TID), and Lys-95 contribute to the substrate site.

It belongs to the dUTPase family. The cofactor is Mg(2+).

The enzyme catalyses dUTP + H2O = dUMP + diphosphate + H(+). It participates in pyrimidine metabolism; dUMP biosynthesis; dUMP from dCTP (dUTP route): step 2/2. In terms of biological role, this enzyme is involved in nucleotide metabolism: it produces dUMP, the immediate precursor of thymidine nucleotides and it decreases the intracellular concentration of dUTP so that uracil cannot be incorporated into DNA. The protein is Deoxyuridine 5'-triphosphate nucleotidohydrolase of Rickettsia massiliae (strain Mtu5).